We begin with the raw amino-acid sequence, 274 residues long: 4-hydroxy-tetrahydrodipicolinate reductase (274 aa).

Residue 7–12 (GVTGRM) coordinates NAD(+). An NADP(+)-binding site is contributed by arginine 40. NAD(+)-binding positions include 103–105 (GTT) and 127–130 (SANF). The active-site Proton donor/acceptor is histidine 160. A (S)-2,3,4,5-tetrahydrodipicolinate-binding site is contributed by histidine 161. Lysine 164 functions as the Proton donor in the catalytic mechanism. 170–171 (GT) contacts (S)-2,3,4,5-tetrahydrodipicolinate.

Belongs to the DapB family. In terms of assembly, homotetramer.

It localises to the cytoplasm. The enzyme catalyses (S)-2,3,4,5-tetrahydrodipicolinate + NAD(+) + H2O = (2S,4S)-4-hydroxy-2,3,4,5-tetrahydrodipicolinate + NADH + H(+). It catalyses the reaction (S)-2,3,4,5-tetrahydrodipicolinate + NADP(+) + H2O = (2S,4S)-4-hydroxy-2,3,4,5-tetrahydrodipicolinate + NADPH + H(+). It functions in the pathway amino-acid biosynthesis; L-lysine biosynthesis via DAP pathway; (S)-tetrahydrodipicolinate from L-aspartate: step 4/4. Functionally, catalyzes the conversion of 4-hydroxy-tetrahydrodipicolinate (HTPA) to tetrahydrodipicolinate. This Blochmanniella floridana protein is 4-hydroxy-tetrahydrodipicolinate reductase.